The chain runs to 336 residues: MVVKVGINGFGRIGRLAFRRIQNVEGVEVTRINDLTDPNMLAHLLKYDTTQGRFDGTVEVKEGGFEVNGNFIKVSAERDPENIDWATDGVEIVLEATGFFAKKEAAEKPLHANGAKKVVITAPGGNDVKQLFSTLTTSILDGTETVISGASCTTNCLAPMAKALHDAFGIQKGLMTTIHAYTGDQMIVDGHRGGGDLRRARAGAANIVPNSTGARKAIGLVIPELNGKLDGAAQRVPVPTGSVTELVVTLDKNVSVDEINAAMKAASNDSFGYTEDPIVSSDIVGVSYGSLFDATQTKVMEVDGSQLVKVVSWYDNEMSYTAQLVRTLEYFAKIAK.

NAD(+) is bound by residues 12–13, aspartate 34, arginine 78, and threonine 121; that span reads RI. D-glyceraldehyde 3-phosphate contacts are provided by residues 151-153, threonine 182, arginine 199, 212-213, and arginine 235; these read SCT and TG. Cysteine 152 acts as the Nucleophile in catalysis. Asparagine 316 lines the NAD(+) pocket.

It belongs to the glyceraldehyde-3-phosphate dehydrogenase family. Homotetramer.

Its subcellular location is the cytoplasm. It catalyses the reaction D-glyceraldehyde 3-phosphate + phosphate + NAD(+) = (2R)-3-phospho-glyceroyl phosphate + NADH + H(+). It functions in the pathway carbohydrate degradation; glycolysis; pyruvate from D-glyceraldehyde 3-phosphate: step 1/5. In terms of biological role, catalyzes the oxidative phosphorylation of glyceraldehyde 3-phosphate (G3P) to 1,3-bisphosphoglycerate (BPG) using the cofactor NAD. The first reaction step involves the formation of a hemiacetal intermediate between G3P and a cysteine residue, and this hemiacetal intermediate is then oxidized to a thioester, with concomitant reduction of NAD to NADH. The reduced NADH is then exchanged with the second NAD, and the thioester is attacked by a nucleophilic inorganic phosphate to produce BPG. The protein is Glyceraldehyde-3-phosphate dehydrogenase (gap) of Streptococcus dysgalactiae subsp. equisimilis (Streptococcus equisimilis).